Reading from the N-terminus, the 686-residue chain is U3 small nucleolar RNA-associated protein 4 homolog (686 aa).

14 WD repeats span residues H7 to F50, Q51 to N92, I93 to I135, Q136 to K181, M182 to G226, T227 to K275, Q276 to K317, V318 to K377, N378 to L427, K428 to H475, A476 to L516, K517 to T566, V567 to T627, and N628 to R666. K321 is covalently cross-linked (Glycyl lysine isopeptide (Lys-Gly) (interchain with G-Cter in SUMO2)).

As to quaternary structure, interacts with HIVEP1 Interacts with NOL11. Part of the small subunit (SSU) processome, composed of more than 70 proteins and the RNA chaperone small nucleolar RNA (snoRNA) U3. May be a component of the proposed t-UTP subcomplex of the ribosomal small subunit (SSU) processome containing at least UTP4, WDR43, HEATR1, UTP15, WDR75. In terms of processing, may be phosphorylated during mitosis; may control the association of this protein with WRD43 and UTP15.

It is found in the nucleus. Its subcellular location is the nucleolus. It localises to the chromosome. Its function is as follows. Ribosome biogenesis factor. Involved in nucleolar processing of pre-18S ribosomal RNA. Part of the small subunit (SSU) processome, first precursor of the small eukaryotic ribosomal subunit. During the assembly of the SSU processome in the nucleolus, many ribosome biogenesis factors, an RNA chaperone and ribosomal proteins associate with the nascent pre-rRNA and work in concert to generate RNA folding, modifications, rearrangements and cleavage as well as targeted d Involved in SSU pre-rRNA processing at sites A', A0, 1 and 2b. Required for optimal pre-ribosomal RNA transcription by RNA polymerase. May be a transcriptional regulator. Functionally, (Microbial infection) Acts as a positive regulator of HIVEP1 which specifically binds to the DNA sequence 5'-GGGACTTTCC-3' found in enhancer elements of numerous viral promoters such as those of HIV-1, SV40, or CMV. The chain is U3 small nucleolar RNA-associated protein 4 homolog from Homo sapiens (Human).